We begin with the raw amino-acid sequence, 678 residues long: Zinc finger translocation-associated protein (678 aa).

4 disordered regions span residues 1–100 (MEPG…PGRD), 182–250 (LGVQ…GSRG), 329–417 (QPEA…HRRH), and 490–583 (LGPP…NYQP). Over residues 62–78 (SAPLPSSRARGPASSGR) the composition is skewed to low complexity. The segment covering 79–88 (KYSDHCEARA) has biased composition (basic and acidic residues). The segment covering 187–201 (AEEEEEEEEEEEEEG) has biased composition (acidic residues). A Glycyl lysine isopeptide (Lys-Gly) (interchain with G-Cter in SUMO2) cross-link involves residue Lys-375. Residues 388 to 398 (AEEEEELEEGE) show a composition bias toward acidic residues. Over residues 492 to 504 (PPRPESPQGPIPP) the composition is skewed to pro residues. Composition is skewed to acidic residues over residues 513 to 529 (GGGD…EEWG) and 543 to 553 (AEEEEDEEDGQ). Over residues 560–572 (LPPPPPPPPPPPP) the composition is skewed to pro residues. The segment covering 573–583 (RSREQRRNYQP) has biased composition (basic and acidic residues).

In Homo sapiens (Human), this protein is Zinc finger translocation-associated protein.